Here is a 101-residue protein sequence, read N- to C-terminus: Replication restart protein PriB (101 aa).

The SSB domain maps to 1–101 (MTTNSLVLSG…IHAENVELKT (101 aa)).

It belongs to the PriB family. In terms of assembly, homodimer. Interacts with PriA and DnaT. Component of the replication restart primosome. Primosome assembly occurs via a 'hand-off' mechanism. PriA binds to replication forks, subsequently PriB then DnaT bind; DnaT then displaces ssDNA to generate the helicase loading substrate.

Involved in the restart of stalled replication forks, which reloads the replicative helicase on sites other than the origin of replication; the PriA-PriB pathway is the major replication restart pathway. During primosome assembly it facilitates complex formation between PriA and DnaT on DNA; stabilizes PriA on DNA. Stimulates the DNA unwinding activity of PriA helicase. This chain is Replication restart protein PriB, found in Shewanella putrefaciens (strain CN-32 / ATCC BAA-453).